The primary structure comprises 377 residues: Leukocyte elastase inhibitor (377 aa).

Methionine 1 carries the post-translational modification N-acetylmethionine.

This sequence belongs to the serpin family. Ov-serpin subfamily.

Its subcellular location is the cytoplasm. Functionally, regulates the activity of the neutrophil proteases. This Xenopus laevis (African clawed frog) protein is Leukocyte elastase inhibitor (serpinb1).